We begin with the raw amino-acid sequence, 178 residues long: Platelet inhibitor triplatin-2 (178 aa).

A signal peptide spans 1–18 (MKMIISLTFLGILMLAFA). 3 cysteine pairs are disulfide-bonded: cysteine 25–cysteine 134, cysteine 60–cysteine 178, and cysteine 90–cysteine 106.

This sequence belongs to the calycin superfamily. Triabin family. Expressed in salivary glands.

It localises to the secreted. Its function is as follows. Inhibits platelet aggregation and vasoconstriction through binding to distinct eicosanoids involved in inflammation (acts as a scavenger), and has a role in inhibiting host innate immunity by impairing platelet-assisted formation of neutrophil extracellular traps (NETs). Inhibits platelet aggregation by collagen, and low doses of thromboxane A2 mimetic (TXA2 mimetic), and arachidonic acid (AA) without affecting aggregation induced by ADP, convulxin (GP6 agonist), and PMA. Binds to TXA2, TXB2, prostaglandine H2 mimetic (PGH2 mimetic), PGJ2, and PGF2alpha. Binding is not observed to leukotrienes, AA, and biogenic amines (PGE1, 5(S)-HETE, 12(S)-HETE, 20-HETE, norepinephrine, epinephrine, serotonin, LTC4 and ADP). Induces relaxation of aorta rat previously contracted with TXA2 mimetic. Moreover, it also impairs platelet-assisted formation of neutrophil extracellular traps (NETs). NETs are web-like structures of DNA and proteins that play an important role in killing of pathogens. In addition, NETs are implicated in thrombus formation. In vivo, this protein exhibits antithrombotic activity in two distinct mice models that are highly dependent on platelets. It is noteworthy that it inhibits thrombosis without promoting excessive bleeding. The sequence is that of Platelet inhibitor triplatin-2 from Triatoma infestans (Assassin bug).